Here is a 942-residue protein sequence, read N- to C-terminus: MMTATEIRQSFLDFFREKQHTVVPSASLMPQSPGLLFTNAGMNQFVPYFLGVWTPPWTPARATDTQKCIRAGGKHNDLEDVGYDSYHHTFFEMLGNWSFGDYFKREAIRWAWELVVERWGFPAERLYATVYAPDKSKGDPGEFDREAWDFWAELFRSRGLDPDVHIVHGNVKDNFWMMGETGPCGPCSELHVDLTPEGNTKGSLVNKDSDQCIEIWNLVFIQYNAESDGSMRNLPACHVDTGMGFERACSIMQCTNGFKDFSRKPSNYATDVFRPLFDRLEVLSGRKYADVYPAPGSKRVDAEDGTLQEAIAFRVIADHLRTLSFSIADGILPGNNGRNYVLRRILRRAVRYGRRLGFTQPFLAELVDTLVESFGQVFPELAARATTVKEVLNREEASFNETLDRGLELFDAETASAGKVSGEFAFKLYDTYGFPIDLTALLAEERGLDIDMERFNRLMEEQRERARAARKSEVVRALDLKTDAVTEFTGYDVDECAATVLEVSRQGDSLFIITDKTPFYAEMGGQVSDAGLIEIGGESYHVMAVQQIGNARAHVVEARPGLEVKPGDRVHLSIDAERRRRIEAHHTATHLLHCALHQVVSPDAAQQGSFVSEDRLRFDFNSSAVSPDQLRLIEEKVNGWIEESLPVHCTERAYADVKGNAAIAQFFGDKYGDVVRVVQVGGCRDGLDGVSMEFCGGTHIANTKNIGLFKIKSEGAIASGVRRIEAMTGDAALEMIRQHVVAKSLEIAKAVEKIKEVNYELADMGLEQVPVPTIEGKPGLTALGASDIRTVNDSLARFDASVEHFKQTALDAEKKLKKARAGQSAAKADALLNEWLSDAPSSLIQVAEGAGELLQELLNGLKKRQYAGAAFLLCVDSSSLLLGAYCGKDAIADGLSAGDMIREVAALAGGKGGGRADQARGSAPQDADPQALAAAARNIING.

Residues histidine 586, histidine 590, cysteine 695, and histidine 699 each coordinate Zn(2+).

The protein belongs to the class-II aminoacyl-tRNA synthetase family. Requires Zn(2+) as cofactor.

Its subcellular location is the cytoplasm. The enzyme catalyses tRNA(Ala) + L-alanine + ATP = L-alanyl-tRNA(Ala) + AMP + diphosphate. Catalyzes the attachment of alanine to tRNA(Ala) in a two-step reaction: alanine is first activated by ATP to form Ala-AMP and then transferred to the acceptor end of tRNA(Ala). Also edits incorrectly charged Ser-tRNA(Ala) and Gly-tRNA(Ala) via its editing domain. In Akkermansia muciniphila (strain ATCC BAA-835 / DSM 22959 / JCM 33894 / BCRC 81048 / CCUG 64013 / CIP 107961 / Muc), this protein is Alanine--tRNA ligase.